The primary structure comprises 354 residues: Clavesin-1 (354 aa).

The 162-residue stretch at 118–279 folds into the CRAL-TRIO domain; the sequence is IKRALIDGFP…EFGGTLPPYD (162 aa). The segment at 333–354 is disordered; that stretch reads AGTLKHEEKGENENTQPLLALD. Over residues 335-344 the composition is skewed to basic and acidic residues; sequence TLKHEEKGEN. Polar residues predominate over residues 345–354; sequence ENTQPLLALD.

Forms a complex with clathrin heavy chain and gamma-adaptin.

It is found in the golgi apparatus. It localises to the trans-Golgi network membrane. Its subcellular location is the early endosome membrane. The protein resides in the cytoplasmic vesicle. The protein localises to the clathrin-coated vesicle. In terms of biological role, required for normal morphology of late endosomes and/or lysosomes in neurons. Binds phosphatidylinositol 3,5-bisphosphate (PtdIns(3,5)P2). This Pongo abelii (Sumatran orangutan) protein is Clavesin-1 (CLVS1).